Reading from the N-terminus, the 680-residue chain is Putative cyclin-dependent serine/threonine-protein kinase DDB_G0272797/DDB_G0274007 (680 aa).

Residues 4 to 381 form the Protein kinase domain; that stretch reads YIILSKCGQG…SLEALEHPWF (378 aa). ATP contacts are provided by residues 10-18 and Lys-33; that span reads CGQGTYGSV. The Proton acceptor role is filled by Asp-125. Disordered regions lie at residues 243-299, 409-444, 483-507, and 597-680; these read QQQQ…LQSP, RQLQ…QRQH, LAQH…QHQQ, and QQQQ…KSNG. Residues 257–286 show a composition bias toward low complexity; the sequence is NNNNNNNNNNNNNNNNNNNNNNNNNNNNNN. The segment covering 287 to 297 has biased composition (polar residues); it reads KYNNISTSCLQ. Composition is skewed to low complexity over residues 410–444, 483–494, and 597–616; these read QLQQ…QRQH, LAQHQQYNSQQH, and QQQQ…PPQH. Positions 617 to 631 are enriched in basic residues; it reads QHQHQHQHQHQHQHQ. Residues 632–642 show a composition bias toward low complexity; that stretch reads HQPQPQHQHQP. A compositionally biased stretch (pro residues) spans 643 to 655; it reads QPQPQPTPTPTPT. Over residues 656-680 the composition is skewed to low complexity; it reads STPTTTTIPPTITTTIQPTISKSNG.

It belongs to the protein kinase superfamily. CMGC Ser/Thr protein kinase family. CDC2/CDKX subfamily.

It carries out the reaction L-seryl-[protein] + ATP = O-phospho-L-seryl-[protein] + ADP + H(+). The catalysed reaction is L-threonyl-[protein] + ATP = O-phospho-L-threonyl-[protein] + ADP + H(+). In Dictyostelium discoideum (Social amoeba), this protein is Putative cyclin-dependent serine/threonine-protein kinase DDB_G0272797/DDB_G0274007.